A 567-amino-acid chain; its full sequence is Septation ring formation regulator EzrA (567 aa).

Topologically, residues 1–2 are extracellular; the sequence is ME. The helical transmembrane segment at 3 to 21 threads the bilayer; it reads IAVIVLLLLGGVMIYNHVY. Over 22–567 the chain is Cytoplasmic; sequence RKKMYSEIDR…IFRDERSKEE (546 aa). Coiled-coil stretches lie at residues 97–188 and 254–465; these read RYAK…LTAS and REIV…LEEK.

It belongs to the EzrA family.

The protein localises to the cell membrane. In terms of biological role, negative regulator of FtsZ ring formation; modulates the frequency and position of FtsZ ring formation. Inhibits FtsZ ring formation at polar sites. Interacts either with FtsZ or with one of its binding partners to promote depolymerization. The sequence is that of Septation ring formation regulator EzrA from Geobacillus sp. (strain WCH70).